An 84-amino-acid polypeptide reads, in one-letter code: Large ribosomal subunit protein bL27 (84 aa).

Residues 1 to 21 are disordered; it reads MAHKKGASSTRNGRDSNAQRL. Residues 7-19 are compositionally biased toward polar residues; the sequence is ASSTRNGRDSNAQ.

It belongs to the bacterial ribosomal protein bL27 family.

The polypeptide is Large ribosomal subunit protein bL27 (Clavibacter sepedonicus (Clavibacter michiganensis subsp. sepedonicus)).